The following is a 290-amino-acid chain: MDKIIKTISENGSFRAYVLDSTETVRTAQEKHQTQASSTVALGRTLIASQILAANEKGQTKITVKVLGTSSLGAIITVADTEGNVKGYVQNPGVDIKKTATGEVLVGPFVGQGEFLVITDYGTGNPYNSMTPLISGEIGEDLAFYLTESQQTPSAVGLNVLLDENDKVKVAGGFLVQVLPGAKEAEIARFEKRIQEMPAISKLLESDDHIEALLAAIYGDEPYKRLSEEEIRFQCDCSKERFMNALATLPKADLEEMRDQDQGAEIICQFCQTAYHFDQNDLEELIRDKS.

Cystine bridges form between Cys235-Cys237 and Cys268-Cys271.

This sequence belongs to the HSP33 family. Under oxidizing conditions two disulfide bonds are formed involving the reactive cysteines. Under reducing conditions zinc is bound to the reactive cysteines and the protein is inactive.

Its subcellular location is the cytoplasm. Functionally, redox regulated molecular chaperone. Protects both thermally unfolding and oxidatively damaged proteins from irreversible aggregation. Plays an important role in the bacterial defense system toward oxidative stress. This is 33 kDa chaperonin from Streptococcus gordonii (strain Challis / ATCC 35105 / BCRC 15272 / CH1 / DL1 / V288).